Consider the following 145-residue polypeptide: UPF0310 protein PH1033 (145 aa).

This sequence belongs to the UPF0310 family.

The chain is UPF0310 protein PH1033 from Pyrococcus horikoshii (strain ATCC 700860 / DSM 12428 / JCM 9974 / NBRC 100139 / OT-3).